Consider the following 198-residue polypeptide: Syndecan-4 (198 aa).

Residues M1–A18 form the signal peptide. Residues E19–E145 lie on the Extracellular side of the membrane. 3 O-linked (Xyl...) (glycosaminoglycan) serine glycosylation sites follow: S39, S61, and S63. O-linked (Xyl...) (chondroitin sulfate) serine glycosylation occurs at S95. The chain crosses the membrane as a helical span at residues V146–Y170. Residues R171 to A198 are Cytoplasmic-facing.

It belongs to the syndecan proteoglycan family. As to quaternary structure, homodimer. Interacts with CDCP1 and SDCBP. Interacts (via its cytoplasmic domain) with GIPC (via its PDZ domain). Interacts (via its cytoplasmic domain) with NUDT16L1. Interacts with DNM2; this interaction is markedly enhanced at focal ahesion site upon induction of focal adhesions and stress-fiber formation. Post-translationally, shedding is enhanced by a number of factors such as heparanase, thrombin or EGF. Also by stress and wound healing. PMA-mediated shedding is inhibited by TIMP3. In terms of processing, O-glycosylated; contains both chondroitin sulfate and heparan sulfate. Ser-39, Ser-61 and Ser-63 can all be modified by either chondroitin sulfate or heparan sulfate, and the protein exists in forms that contain only chondroitin sulfate, only heparan sulfate and both chondroitin sulfate and heparan sulfate.

The protein localises to the membrane. It is found in the secreted. Its function is as follows. Cell surface proteoglycan which regulates exosome biogenesis in concert with SDCBP and PDCD6IP. This Pongo abelii (Sumatran orangutan) protein is Syndecan-4.